A 190-amino-acid chain; its full sequence is GMP synthase [glutamine-hydrolyzing] subunit A (190 aa).

Positions 2-189 (TILVINNKGQ…YEICKKRCNN (188 aa)) constitute a Glutamine amidotransferase type-1 domain. The active-site Nucleophile is the cysteine 76. Active-site residues include histidine 163 and glutamate 165.

Heterodimer composed of a glutamine amidotransferase subunit (A) and a GMP-binding subunit (B).

The enzyme catalyses XMP + L-glutamine + ATP + H2O = GMP + L-glutamate + AMP + diphosphate + 2 H(+). It functions in the pathway purine metabolism; GMP biosynthesis; GMP from XMP (L-Gln route): step 1/1. Its function is as follows. Catalyzes the synthesis of GMP from XMP. This is GMP synthase [glutamine-hydrolyzing] subunit A from Methanobrevibacter smithii (strain ATCC 35061 / DSM 861 / OCM 144 / PS).